A 114-amino-acid polypeptide reads, in one-letter code: Fluoride-specific ion channel FluC 2 (114 aa).

The next 4 membrane-spanning stretches (helical) occupy residues 3 to 23 (YVII…ECWL), 31 to 51 (LMTA…WILA), 57 to 77 (GIEL…TFCM), and 92 to 112 (MIYL…GWNV). The Na(+) site is built by glycine 67 and threonine 70.

This sequence belongs to the fluoride channel Fluc/FEX (TC 1.A.43) family.

Its subcellular location is the cell membrane. The enzyme catalyses fluoride(in) = fluoride(out). Its activity is regulated as follows. Na(+) is not transported, but it plays an essential structural role and its presence is essential for fluoride channel function. Its function is as follows. Fluoride-specific ion channel. Important for reducing fluoride concentration in the cell, thus reducing its toxicity. This Shouchella clausii (strain KSM-K16) (Alkalihalobacillus clausii) protein is Fluoride-specific ion channel FluC 2.